A 537-amino-acid polypeptide reads, in one-letter code: Methionine--tRNA ligase (537 aa).

Positions 11 to 21 match the 'HIGH' region motif; it reads AYPNAAPHIGH. The 'KMSKS' region signature appears at 301 to 305; sequence KMSKS. Position 304 (lysine 304) interacts with ATP. A disordered region spans residues 503-537; sequence PPPTGVFPRYQPSEIEGADPVKSSSKRREHNKRRE. Basic residues predominate over residues 526–537; sequence SSKRREHNKRRE.

The protein belongs to the class-I aminoacyl-tRNA synthetase family. MetG type 2B subfamily. As to quaternary structure, monomer.

It is found in the cytoplasm. It carries out the reaction tRNA(Met) + L-methionine + ATP = L-methionyl-tRNA(Met) + AMP + diphosphate. In terms of biological role, is required not only for elongation of protein synthesis but also for the initiation of all mRNA translation through initiator tRNA(fMet) aminoacylation. This Mycobacterium leprae (strain TN) protein is Methionine--tRNA ligase.